The primary structure comprises 608 residues: Microtubule-associated protein VP7 (608 aa).

The protein resides in the virion. The protein localises to the host cytoplasm. It is found in the host cytoskeleton. Minor inner capsid component. Displays NTPase and RNA 5'-triphosphatase (RTPase) activities. May function as a cofactor of polymerase. Associates with microtubules and plays a role in the formation, structural organization and morphology of viral inclusions, where the assembly of cores and the replication of viral RNA occur. The protein is Microtubule-associated protein VP7 of Oryza latifolia (Indian wild rice).